The primary structure comprises 368 residues: Ferrochelatase (368 aa).

Residues His209 and Glu290 each coordinate Fe cation.

This sequence belongs to the ferrochelatase family.

The protein localises to the cytoplasm. The enzyme catalyses heme b + 2 H(+) = protoporphyrin IX + Fe(2+). Its pathway is porphyrin-containing compound metabolism; protoheme biosynthesis; protoheme from protoporphyrin-IX: step 1/1. Its function is as follows. Catalyzes the ferrous insertion into protoporphyrin IX. The polypeptide is Ferrochelatase (Herminiimonas arsenicoxydans).